The primary structure comprises 325 residues: ATP phosphoribosyltransferase (325 aa).

It belongs to the ATP phosphoribosyltransferase family. Long subfamily. The cofactor is Mg(2+).

The protein resides in the cytoplasm. It carries out the reaction 1-(5-phospho-beta-D-ribosyl)-ATP + diphosphate = 5-phospho-alpha-D-ribose 1-diphosphate + ATP. It participates in amino-acid biosynthesis; L-histidine biosynthesis; L-histidine from 5-phospho-alpha-D-ribose 1-diphosphate: step 1/9. With respect to regulation, feedback inhibited by histidine. Catalyzes the condensation of ATP and 5-phosphoribose 1-diphosphate to form N'-(5'-phosphoribosyl)-ATP (PR-ATP). Has a crucial role in the pathway because the rate of histidine biosynthesis seems to be controlled primarily by regulation of HisG enzymatic activity. The polypeptide is ATP phosphoribosyltransferase (Rhodopseudomonas palustris (strain BisA53)).